Consider the following 149-residue polypeptide: MRAVVQRVAEASVTVNGEETGRIGKGVLVFLGVGPDDGSGDIRYLSEKIVNLRIFPDASDKMNLSVREVGGGVLVISQFTLFGDCRKGRRPSYAGAAPPELARRLYGEFVEELKKQAVPVATGMFQEMMRVHLVNDGPVTLLLDSRKVF.

The short motif at 137 to 138 is the Gly-cisPro motif, important for rejection of L-amino acids element; that stretch reads GP.

The protein belongs to the DTD family. As to quaternary structure, homodimer.

It localises to the cytoplasm. It carries out the reaction glycyl-tRNA(Ala) + H2O = tRNA(Ala) + glycine + H(+). The catalysed reaction is a D-aminoacyl-tRNA + H2O = a tRNA + a D-alpha-amino acid + H(+). Functionally, an aminoacyl-tRNA editing enzyme that deacylates mischarged D-aminoacyl-tRNAs. Also deacylates mischarged glycyl-tRNA(Ala), protecting cells against glycine mischarging by AlaRS. Acts via tRNA-based rather than protein-based catalysis; rejects L-amino acids rather than detecting D-amino acids in the active site. By recycling D-aminoacyl-tRNA to D-amino acids and free tRNA molecules, this enzyme counteracts the toxicity associated with the formation of D-aminoacyl-tRNA entities in vivo and helps enforce protein L-homochirality. This is D-aminoacyl-tRNA deacylase from Syntrophobacter fumaroxidans (strain DSM 10017 / MPOB).